Reading from the N-terminus, the 369-residue chain is Phospho-N-acetylmuramoyl-pentapeptide-transferase (369 aa).

Helical transmembrane passes span 3 to 23 (ALLG…PLFI), 53 to 73 (GGIV…LLTW), 81 to 101 (VTPS…VGFL), 118 to 138 (WQKI…AITL), 162 to 182 (FMAL…CLIV), 198 to 218 (LAAG…FWQF), 240 to 260 (PLDL…FLWW), 267 to 287 (IFMG…LAIL), 290 to 310 (TELL…SVVL), and 347 to 367 (FWII…LEWI).

Belongs to the glycosyltransferase 4 family. MraY subfamily. It depends on Mg(2+) as a cofactor.

The protein localises to the cell membrane. It carries out the reaction UDP-N-acetyl-alpha-D-muramoyl-L-alanyl-gamma-D-glutamyl-meso-2,6-diaminopimeloyl-D-alanyl-D-alanine + di-trans,octa-cis-undecaprenyl phosphate = di-trans,octa-cis-undecaprenyl diphospho-N-acetyl-alpha-D-muramoyl-L-alanyl-D-glutamyl-meso-2,6-diaminopimeloyl-D-alanyl-D-alanine + UMP. Its pathway is cell wall biogenesis; peptidoglycan biosynthesis. Its function is as follows. Catalyzes the initial step of the lipid cycle reactions in the biosynthesis of the cell wall peptidoglycan: transfers peptidoglycan precursor phospho-MurNAc-pentapeptide from UDP-MurNAc-pentapeptide onto the lipid carrier undecaprenyl phosphate, yielding undecaprenyl-pyrophosphoryl-MurNAc-pentapeptide, known as lipid I. This Clavibacter sepedonicus (Clavibacter michiganensis subsp. sepedonicus) protein is Phospho-N-acetylmuramoyl-pentapeptide-transferase.